The primary structure comprises 284 residues: 4-diphosphocytidyl-2-C-methyl-D-erythritol kinase (284 aa).

Residue K9 is part of the active site. P90–S100 provides a ligand contact to ATP. Residue D132 is part of the active site.

Belongs to the GHMP kinase family. IspE subfamily.

The enzyme catalyses 4-CDP-2-C-methyl-D-erythritol + ATP = 4-CDP-2-C-methyl-D-erythritol 2-phosphate + ADP + H(+). It functions in the pathway isoprenoid biosynthesis; isopentenyl diphosphate biosynthesis via DXP pathway; isopentenyl diphosphate from 1-deoxy-D-xylulose 5-phosphate: step 3/6. Its function is as follows. Catalyzes the phosphorylation of the position 2 hydroxy group of 4-diphosphocytidyl-2C-methyl-D-erythritol. In Dehalococcoides mccartyi (strain ATCC BAA-2266 / KCTC 15142 / 195) (Dehalococcoides ethenogenes (strain 195)), this protein is 4-diphosphocytidyl-2-C-methyl-D-erythritol kinase.